Consider the following 83-residue polypeptide: Subtilisin-chymotrypsin inhibitor CI-1A (83 aa).

Positions 1 to 24 are disordered; sequence MSSMEGSVLKYPEPTEGSIGASSA.

It belongs to the protease inhibitor I13 (potato type I serine protease inhibitor) family.

Functionally, inhibits both subtilisin and chymotrypsin. The polypeptide is Subtilisin-chymotrypsin inhibitor CI-1A (Hordeum vulgare (Barley)).